A 396-amino-acid chain; its full sequence is 1-deoxy-D-xylulose 5-phosphate reductoisomerase (396 aa).

Residues Thr15, Gly16, Ser17, Ile18, Gly41, and Asn129 each coordinate NADPH. 1-deoxy-D-xylulose 5-phosphate is bound at residue Lys130. An NADPH-binding site is contributed by Glu131. Asp155 is a binding site for Mn(2+). 1-deoxy-D-xylulose 5-phosphate-binding residues include Ser156, Glu157, Ser182, and His205. Glu157 provides a ligand contact to Mn(2+). Gly211 contributes to the NADPH binding site. Residues Ser218, Asn223, Lys224, and Glu227 each contribute to the 1-deoxy-D-xylulose 5-phosphate site. Glu227 contributes to the Mn(2+) binding site.

Belongs to the DXR family. Mg(2+) serves as cofactor. Requires Mn(2+) as cofactor.

It catalyses the reaction 2-C-methyl-D-erythritol 4-phosphate + NADP(+) = 1-deoxy-D-xylulose 5-phosphate + NADPH + H(+). It functions in the pathway isoprenoid biosynthesis; isopentenyl diphosphate biosynthesis via DXP pathway; isopentenyl diphosphate from 1-deoxy-D-xylulose 5-phosphate: step 1/6. Functionally, catalyzes the NADPH-dependent rearrangement and reduction of 1-deoxy-D-xylulose-5-phosphate (DXP) to 2-C-methyl-D-erythritol 4-phosphate (MEP). The sequence is that of 1-deoxy-D-xylulose 5-phosphate reductoisomerase from Xanthomonas euvesicatoria pv. vesicatoria (strain 85-10) (Xanthomonas campestris pv. vesicatoria).